The sequence spans 338 residues: Probable O-antigen biosynthesis glycosyltransferase WbiN (338 aa).

This sequence belongs to the glycosyltransferase group 1 family. Glycosyltransferase 4 subfamily.

The catalysed reaction is N-acetyl-alpha-D-galactosaminyl-di-trans,octa-cis-undecaprenyl diphosphate + UDP-N-acetyl-alpha-D-galactosamine = alpha-D-GalNAc-(1-&gt;3)-alpha-D-GalNAc-di-trans,octa-cis-undecaprenyl diphosphate + UDP + H(+). The protein operates within bacterial outer membrane biogenesis; LPS O-antigen biosynthesis. In terms of biological role, involved in the assembly of the O-repeating unit during O-antigen biosynthesis. This Escherichia coli protein is Probable O-antigen biosynthesis glycosyltransferase WbiN.